Reading from the N-terminus, the 248-residue chain is Carboxy-S-adenosyl-L-methionine synthase (248 aa).

S-adenosyl-L-methionine is bound by residues tyrosine 40, 65–67, 95–96, 123–124, asparagine 138, and arginine 205; these read GCS, DN, and DI.

Belongs to the class I-like SAM-binding methyltransferase superfamily. Cx-SAM synthase family. In terms of assembly, homodimer.

It carries out the reaction prephenate + S-adenosyl-L-methionine = carboxy-S-adenosyl-L-methionine + 3-phenylpyruvate + H2O. Functionally, catalyzes the conversion of S-adenosyl-L-methionine (SAM) to carboxy-S-adenosyl-L-methionine (Cx-SAM). The sequence is that of Carboxy-S-adenosyl-L-methionine synthase from Hahella chejuensis (strain KCTC 2396).